The sequence spans 444 residues: Serine carboxypeptidase 2 (444 aa).

60–62 (NGG) provides a ligand contact to substrate. Disulfide bonds link Cys65–Cys324, Cys222–Cys234, and Cys258–Cys291. Residues Asn116 and Asn127 are each glycosylated (N-linked (GlcNAc...) asparagine). 157–159 (ESY) lines the substrate pocket. Ser158 is a catalytic residue. Asn259 carries an N-linked (GlcNAc...) asparagine glycan. The propeptide at 260 to 286 (ITSSSSSSSSSLSQQRRSRGRYPWLTG) is linker peptide. N-linked (GlcNAc...) asparagine glycans are attached at residues Asn312 and Asn318. Residues Asp361 and His413 contribute to the active site. 409–413 (RGAGH) is a substrate binding site.

This sequence belongs to the peptidase S10 family. Carboxypeptidase II is a dimer, where each monomer is composed of two chains linked by a disulfide bond. In terms of processing, N-glycosylated.

The catalysed reaction is Preferential release of a C-terminal arginine or lysine residue.. This is Serine carboxypeptidase 2 (CBP2) from Triticum aestivum (Wheat).